The primary structure comprises 399 residues: Glutathione S-transferase LANCL1 (399 aa).

At Ala2 the chain carries N-acetylalanine. N6-acetyllysine is present on Lys142. Cys276 lines the Zn(2+) pocket. Position 317 (Lys317) interacts with glutathione. Cys322 and His323 together coordinate Zn(2+). Residue 364–367 participates in glutathione binding; the sequence is RTPD.

The protein belongs to the LanC-like protein family. As to quaternary structure, interacts with the C-terminal of STOM. Interacts with the EPS8 SH3 domain. Interaction with EPS8 is inhibited by glutathione binding. (Microbial infection) Interacts with P.falciparum SBP1. As to expression, detected in erythrocytes, brain, kidney, testis, ovary, heart, lung, placenta and spleen (at protein level). Ubiquitous. Strongly expressed in brain, spinal cord, pituitary gland, kidney, heart, skeletal muscle, pancreas, ovary and testis.

The protein localises to the cytoplasm. It localises to the cell membrane. It catalyses the reaction RX + glutathione = an S-substituted glutathione + a halide anion + H(+). The enzyme catalyses 1-chloro-2,4-dinitrobenzene + glutathione = 2,4-dinitrophenyl-S-glutathione + chloride + H(+). In terms of biological role, functions as a glutathione transferase. Catalyzes conjugation of the glutathione (GSH) to artificial substrates 1-chloro-2,4-dinitrobenzene (CDNB) and p-nitrophenyl acetate. Mitigates neuronal oxidative stress during normal postnatal development and in response to oxidative stresses probably through GSH antioxidant defense mechanism. May play a role in EPS8 signaling. Binds glutathione. This chain is Glutathione S-transferase LANCL1, found in Homo sapiens (Human).